The chain runs to 474 residues: Tryptophan biosynthesis protein TrpCF (474 aa).

The interval 1-262 (MTSNNLPTVL…LAARELVYGP (262 aa)) is indole-3-glycerol phosphate synthase. The N-(5'-phosphoribosyl)anthranilate isomerase stretch occupies residues 263 to 474 (NKVCGLTSPS…IFATISTFHY (212 aa)).

The protein in the N-terminal section; belongs to the TrpC family. It in the C-terminal section; belongs to the TrpF family. In terms of assembly, monomer.

It carries out the reaction N-(5-phospho-beta-D-ribosyl)anthranilate = 1-(2-carboxyphenylamino)-1-deoxy-D-ribulose 5-phosphate. The catalysed reaction is 1-(2-carboxyphenylamino)-1-deoxy-D-ribulose 5-phosphate + H(+) = (1S,2R)-1-C-(indol-3-yl)glycerol 3-phosphate + CO2 + H2O. It functions in the pathway amino-acid biosynthesis; L-tryptophan biosynthesis; L-tryptophan from chorismate: step 3/5. The protein operates within amino-acid biosynthesis; L-tryptophan biosynthesis; L-tryptophan from chorismate: step 4/5. Its function is as follows. Bifunctional enzyme that catalyzes two sequential steps of tryptophan biosynthetic pathway. The first reaction is catalyzed by the isomerase, coded by the TrpF domain; the second reaction is catalyzed by the synthase, coded by the TrpC domain. This is Tryptophan biosynthesis protein TrpCF (trpC) from Corynebacterium glutamicum (strain ATCC 13032 / DSM 20300 / JCM 1318 / BCRC 11384 / CCUG 27702 / LMG 3730 / NBRC 12168 / NCIMB 10025 / NRRL B-2784 / 534).